We begin with the raw amino-acid sequence, 89 residues long: Cell division topological specificity factor (89 aa).

This sequence belongs to the MinE family.

Functionally, prevents the cell division inhibition by proteins MinC and MinD at internal division sites while permitting inhibition at polar sites. This ensures cell division at the proper site by restricting the formation of a division septum at the midpoint of the long axis of the cell. The polypeptide is Cell division topological specificity factor (Proteus mirabilis (strain HI4320)).